We begin with the raw amino-acid sequence, 146 residues long: Probable calcium-binding protein CML32 (146 aa).

4 consecutive EF-hand domains span residues 1-33 (MSVAEIFERVDKNKDGKISWDEFAEAIRAFSPS), 34-69 (ITSEEIDNMFREIDVDGDNQIDVAEYASCLMLGGEG), 73-108 (DEDIVMKEAFDLYDIDGDGKISASEIHVVLKRLGEK), and 109-144 (QTIAECIAMVRAVDADGDGFVSFEEFKTMMSCNNKK). Ca(2+)-binding residues include Asp-11, Asn-13, Asp-15, Lys-17, Glu-22, Asp-47, Asp-49, Asp-51, Gln-53, Glu-58, Asp-86, Asp-88, Asp-90, Lys-92, Glu-97, Asp-122, Asp-124, Asp-126, and Glu-133.

In terms of biological role, potential calcium sensor. The polypeptide is Probable calcium-binding protein CML32 (CML32) (Arabidopsis thaliana (Mouse-ear cress)).